The following is a 91-amino-acid chain: Small ribosomal subunit protein uS19 (91 aa).

It belongs to the universal ribosomal protein uS19 family.

Functionally, protein S19 forms a complex with S13 that binds strongly to the 16S ribosomal RNA. This chain is Small ribosomal subunit protein uS19, found in Leptothrix cholodnii (strain ATCC 51168 / LMG 8142 / SP-6) (Leptothrix discophora (strain SP-6)).